Reading from the N-terminus, the 250-residue chain is tRNA:m(4)X modification enzyme TRM13 (250 aa).

A compositionally biased stretch (basic residues) spans 1-10 (MGRAPAKRKP). The tract at residues 1–20 (MGRAPAKRKPSSPPPPPPPG) is disordered. Residues 11–20 (SSPPPPPPPG) show a composition bias toward pro residues. The segment at 62–89 (LVPCPVDPSHTVLEENLEAHVGKCPLKK) adopts a CHHC U11-48K-type zinc-finger fold. The Zn(2+) site is built by Cys65, His71, His81, and Cys85.

Belongs to the methyltransferase TRM13 family.

Its subcellular location is the nucleus. It is found in the cytoplasm. It carries out the reaction cytidine(4) in tRNA(Pro) + S-adenosyl-L-methionine = 2'-O-methylcytidine(4) in tRNA(Pro) + S-adenosyl-L-homocysteine + H(+). The enzyme catalyses cytidine(4) in tRNA(Gly)(GCC) + S-adenosyl-L-methionine = 2'-O-methylcytidine(4) in tRNA(Gly)(GCC) + S-adenosyl-L-homocysteine + H(+). It catalyses the reaction adenosine(4) in tRNA(His) + S-adenosyl-L-methionine = 2'-O-methyladenosine(4) in tRNA(His) + S-adenosyl-L-homocysteine + H(+). In terms of biological role, tRNA methylase that catalyzes 2'-O-methyladenosine (Am) nucleoside formation on tRNA(Gly)(GCC) in vitro. May 2'-O-methylate cytidine(4) in tRNA(Pro) and tRNA(Gly)(GCC), and adenosine(4) in tRNA(His). Involved in salt stress tolerance. This Oryza sativa subsp. japonica (Rice) protein is tRNA:m(4)X modification enzyme TRM13.